Consider the following 502-residue polypeptide: ATP synthase subunit alpha (502 aa).

Positions 114-139 (PIDGRGPIETSKTRPIESPAPGVMDR) are disordered. An ATP-binding site is contributed by 169-176 (GDRQTGKT).

The protein belongs to the ATPase alpha/beta chains family. As to quaternary structure, F-type ATPases have 2 components, CF(1) - the catalytic core - and CF(0) - the membrane proton channel. CF(1) has five subunits: alpha(3), beta(3), gamma(1), delta(1), epsilon(1). CF(0) has three main subunits: a(1), b(2) and c(9-12). The alpha and beta chains form an alternating ring which encloses part of the gamma chain. CF(1) is attached to CF(0) by a central stalk formed by the gamma and epsilon chains, while a peripheral stalk is formed by the delta and b chains.

The protein resides in the cell membrane. The catalysed reaction is ATP + H2O + 4 H(+)(in) = ADP + phosphate + 5 H(+)(out). In terms of biological role, produces ATP from ADP in the presence of a proton gradient across the membrane. The alpha chain is a regulatory subunit. The sequence is that of ATP synthase subunit alpha from Halalkalibacterium halodurans (strain ATCC BAA-125 / DSM 18197 / FERM 7344 / JCM 9153 / C-125) (Bacillus halodurans).